The sequence spans 320 residues: Methionyl-tRNA formyltransferase (320 aa).

112–115 (SLLP) provides a ligand contact to (6S)-5,6,7,8-tetrahydrofolate.

It belongs to the Fmt family.

It catalyses the reaction L-methionyl-tRNA(fMet) + (6R)-10-formyltetrahydrofolate = N-formyl-L-methionyl-tRNA(fMet) + (6S)-5,6,7,8-tetrahydrofolate + H(+). Attaches a formyl group to the free amino group of methionyl-tRNA(fMet). The formyl group appears to play a dual role in the initiator identity of N-formylmethionyl-tRNA by promoting its recognition by IF2 and preventing the misappropriation of this tRNA by the elongation apparatus. This chain is Methionyl-tRNA formyltransferase, found in Allorhizobium ampelinum (strain ATCC BAA-846 / DSM 112012 / S4) (Agrobacterium vitis (strain S4)).